The following is a 209-amino-acid chain: uncharacterized protein (209 aa).

Its subcellular location is the plastid. It localises to the chloroplast. This is an uncharacterized protein from Porphyra purpurea (Red seaweed).